We begin with the raw amino-acid sequence, 324 residues long: Aldo-keto reductase family 1 member A1-A (324 aa).

NADP(+) is bound by residues Gly10 to Gly19, Thr20, Trp21, and Asp44. Tyr49 functions as the Proton donor in the catalytic mechanism. 12 residues coordinate NADP(+): Ser161, Asn162, Ser210, Leu212, Ser214, Lys262, Ser263, Val264, Thr265, Arg268, Gln271, and Asn272.

The protein belongs to the aldo/keto reductase family.

Its subcellular location is the cytoplasm. It localises to the cytosol. It is found in the apical cell membrane. The catalysed reaction is a primary alcohol + NADP(+) = an aldehyde + NADPH + H(+). The enzyme catalyses S-nitroso-CoA + NADPH + H(+) = sulfinamide-CoA + NADP(+). It catalyses the reaction S-nitrosoglutathione + NADPH + H(+) = S-(hydroxysulfenamide)glutathione + NADP(+). In terms of biological role, catalyzes the NADPH-dependent reduction of a wide variety of carbonyl-containing compounds to their corresponding alcohols. Displays enzymatic activity towards endogenous metabolites such as aromatic and aliphatic aldehydes, ketones, monosaccharides and bile acids. Acts as an aldehyde-detoxification enzyme. Also acts as an inhibitor of protein S-nitrosylation by mediating degradation of S-nitroso-coenzyme A (S-nitroso-CoA), a cofactor required to S-nitrosylate proteins. Also acts as a S-nitroso-glutathione reductase by catalyzing the NADPH-dependent reduction of S-nitrosoglutathione. Displays no reductase activity towards retinoids. This chain is Aldo-keto reductase family 1 member A1-A (akr1a1a), found in Danio rerio (Zebrafish).